Reading from the N-terminus, the 224-residue chain is dTTP/UTP pyrophosphatase (224 aa).

The active-site Proton acceptor is the Asp-77.

It belongs to the Maf family. YhdE subfamily. Requires a divalent metal cation as cofactor.

The protein localises to the cytoplasm. It carries out the reaction dTTP + H2O = dTMP + diphosphate + H(+). The catalysed reaction is UTP + H2O = UMP + diphosphate + H(+). Nucleoside triphosphate pyrophosphatase that hydrolyzes dTTP and UTP. May have a dual role in cell division arrest and in preventing the incorporation of modified nucleotides into cellular nucleic acids. The polypeptide is dTTP/UTP pyrophosphatase (Dehalococcoides mccartyi (strain ATCC BAA-2100 / JCM 16839 / KCTC 5957 / BAV1)).